Reading from the N-terminus, the 668-residue chain is NADH-ubiquinone oxidoreductase chain 5 (668 aa).

The next 18 membrane-spanning stretches (helical) occupy residues 1–21 (MYII…LFGH), 31–51 (IAVG…YEIL), 81–101 (LTSI…LYSM), 111–131 (TRFF…VTAD), 133–153 (FVQL…LINF), 178–198 (LFFG…SVIF), 211–231 (LLGY…IGVV), 251–271 (TPVS…FLVL), 283–303 (ILNI…TIGI), 311–331 (VIAY…GLLN), 339–359 (LTTH…VIHG), 375–395 (LMPL…GFPF), 421–441 (AIIG…LLIL), 462–482 (TNMV…GYLT), 519–539 (LLPL…YFNL), 566–586 (FDFL…YDVM), 629–649 (IVQA…IGFL), and 650–668 (YVEL…PKIK).

Belongs to the complex I subunit 5 family.

The protein resides in the mitochondrion inner membrane. The enzyme catalyses a ubiquinone + NADH + 5 H(+)(in) = a ubiquinol + NAD(+) + 4 H(+)(out). Core subunit of the mitochondrial membrane respiratory chain NADH dehydrogenase (Complex I) that is believed to belong to the minimal assembly required for catalysis. Complex I functions in the transfer of electrons from NADH to the respiratory chain. The immediate electron acceptor for the enzyme is believed to be ubiquinone. The sequence is that of NADH-ubiquinone oxidoreductase chain 5 (nad5) from Dictyostelium citrinum (Slime mold).